Consider the following 86-residue polypeptide: Small ribosomal subunit protein bS20 (86 aa).

This sequence belongs to the bacterial ribosomal protein bS20 family.

Binds directly to 16S ribosomal RNA. The sequence is that of Small ribosomal subunit protein bS20 from Bifidobacterium longum subsp. infantis (strain ATCC 15697 / DSM 20088 / JCM 1222 / NCTC 11817 / S12).